Consider the following 514-residue polypeptide: Inosine-5'-monophosphate dehydrogenase (514 aa).

2 consecutive CBS domains span residues 112-171 (FISK…DTPV) and 175-233 (MTRR…PHST). NAD(+) contacts are provided by residues 270-272 (DSS) and 320-322 (GMG). K(+)-binding residues include glycine 322 and glycine 324. Residue serine 325 participates in IMP binding. Cysteine 327 provides a ligand contact to K(+). Cysteine 327 (thioimidate intermediate) is an active-site residue. IMP contacts are provided by residues 360–362 (DGG), 383–384 (GG), and 407–411 (YRGMG). The active-site Proton acceptor is arginine 425. IMP is bound at residue glutamine 437. K(+) is bound by residues glutamate 496, glycine 497, and glycine 498. The Microbody targeting signal motif lies at 512 to 514 (AKM).

This sequence belongs to the IMPDH/GMPR family. In terms of assembly, heterotetramer. Interacts with glycosomal protein sorting receptor PEX5. K(+) is required as a cofactor.

Its subcellular location is the glycosome. The catalysed reaction is IMP + NAD(+) + H2O = XMP + NADH + H(+). It participates in purine metabolism; XMP biosynthesis via de novo pathway; XMP from IMP: step 1/1. Mycophenolic acid (MPA) is a non-competitive inhibitor that prevents formation of the closed enzyme conformation by binding to the same site as the amobile flap. In contrast, mizoribine monophosphate (MZP) is a competitive inhibitor that induces the closed conformation. MPA is a potent inhibitor of mammalian IMPDHs but a poor inhibitor of the bacterial enzymes. MZP is a more potent inhibitor of bacterial IMPDH. Potently inhibited by MPA. Inhibited by XMP and GMP. In terms of biological role, catalyzes the conversion of inosine 5'-phosphate (IMP) to xanthosine 5'-phosphate (XMP), the first committed and rate-limiting step in the de novo synthesis of guanine nucleotides, and therefore plays an important role in the regulation of cell growth. The protein is Inosine-5'-monophosphate dehydrogenase of Leishmania donovani.